The following is a 198-amino-acid chain: Glycerol-3-phosphate acyltransferase (198 aa).

5 helical membrane passes run 5 to 25 (LILL…LWIG), 56 to 76 (SIVT…PFFF), 84 to 104 (FWLL…FAGF), 114 to 134 (AGVI…VFLV), and 158 to 178 (LFMG…FVIW).

It belongs to the PlsY family. As to quaternary structure, probably interacts with PlsX.

Its subcellular location is the cell membrane. It carries out the reaction an acyl phosphate + sn-glycerol 3-phosphate = a 1-acyl-sn-glycero-3-phosphate + phosphate. It functions in the pathway lipid metabolism; phospholipid metabolism. Catalyzes the transfer of an acyl group from acyl-phosphate (acyl-PO(4)) to glycerol-3-phosphate (G3P) to form lysophosphatidic acid (LPA). This enzyme utilizes acyl-phosphate as fatty acyl donor, but not acyl-CoA or acyl-ACP. This chain is Glycerol-3-phosphate acyltransferase, found in Listeria monocytogenes serotype 4b (strain CLIP80459).